The following is a 231-amino-acid chain: NADH-ubiquinone oxidoreductase chain 4 (231 aa).

The next 6 helical transmembrane spans lie at Pro1–Ile21, Leu34–Leu54, Ser61–Ile80, Trp84–Leu106, Ile128–Pro148, and Thr169–Leu189.

Belongs to the complex I subunit 4 family.

It localises to the mitochondrion membrane. The catalysed reaction is a ubiquinone + NADH + 5 H(+)(in) = a ubiquinol + NAD(+) + 4 H(+)(out). In terms of biological role, core subunit of the mitochondrial membrane respiratory chain NADH dehydrogenase (Complex I) that is believed to belong to the minimal assembly required for catalysis. Complex I functions in the transfer of electrons from NADH to the respiratory chain. The immediate electron acceptor for the enzyme is believed to be ubiquinone. This Metlapilcoatlus nummifer (Mexican jumping pitviper) protein is NADH-ubiquinone oxidoreductase chain 4 (MT-ND4).